Consider the following 297-residue polypeptide: Oxidoreductase R1 (297 aa).

It belongs to the asaB hydroxylase/desaturase family.

It functions in the pathway secondary metabolite biosynthesis. Its function is as follows. Oxidoreductase; part of the gene cluster that mediates the biosynthesis of squalestatin S1 (SQS1, also known as zaragozic acid A), a heavily oxidized fungal polyketide that offers potent cholesterol lowering activity by targeting squalene synthase (SS). SQS1 is composed of a 2,8-dioxobicyclic[3.2.1]octane-3,4,5-tricarboxyclic acid core that is connected to two lipophilic polyketide arms. These initial steps feature the priming of an unusual benzoic acid starter unit onto the highly reducing polyketide synthase pks2, followed by oxaloacetate extension and product release to generate a tricarboxylic acid containing product. The phenylalanine ammonia lyase (PAL) M7 and the acyl-CoA ligase M9 are involved in transforming phenylalanine into benzoyl-CoA. The citrate synthase-like protein R3 is involved in connecting the C-alpha-carbons of the hexaketide chain and oxaloacetate to afford the tricarboxylic acid unit. The potential hydrolytic enzymes, M8 and M10, are in close proximity to pks2 and may participate in product release. On the other side, the tetraketide arm is synthesized by a the squalestatin tetraketide synthase pks1 and enzymatically esterified to the core in the last biosynthetic step, by the acetyltransferase M4. The biosynthesis of the tetraketide must involve 3 rounds of chain extension. After the first and second rounds methyl-transfer occurs, and in all rounds of extension the ketoreductase and dehydratase are active. The enoyl reductase and C-MeT of pks1 are not active in the final round of extension. The acetyltransferase M4 appears to have a broad substrate selectivity for its acyl CoA substrate, allowing the in vitro synthesis of novel squalestatins. The biosynthesis of SQS1 requires several oxidative steps likely performed by oxidoreductases M1, R1 and R2. Finally, in support of the identification of the cluster as being responsible for SQS1 production, the cluster contains a gene encoding a putative squalene synthase (SS) R6, suggesting a likely mechanism for self-resistance. This chain is Oxidoreductase R1, found in Phoma sp. (strain ATCC 20986 / MF5453).